The chain runs to 287 residues: NAD-dependent protein deacylase sir-2.3 (287 aa).

One can recognise a Deacetylase sirtuin-type domain in the interval 10–287 (TELCENSLKK…YRISDVLKEM (278 aa)). Residues 35 to 55 (GAGI…VGLY) and 116 to 119 (QNVD) contribute to the NAD(+) site. H134 functions as the Proton acceptor in the catalytic mechanism. Residues C142, C145, C196, and C199 each coordinate Zn(2+). NAD(+) contacts are provided by residues 236–238 (GTS), 262–264 (NIG), and I280.

Belongs to the sirtuin family. Class II subfamily. As to quaternary structure, interacts with pyc-1, pcca-1 and mccc-1. The cofactor is Zn(2+). In terms of tissue distribution, ubiquitously expressed with high expression in the pharynx, body wall muscles and gonad. Strong expression in a subset of non-neuronal cells in the head.

The protein localises to the mitochondrion matrix. Its subcellular location is the mitochondrion. The enzyme catalyses N(6)-acetyl-L-lysyl-[protein] + NAD(+) + H2O = 2''-O-acetyl-ADP-D-ribose + nicotinamide + L-lysyl-[protein]. Functionally, NAD-dependent protein deacylase. Catalyzes the NAD-dependent hydrolysis of acyl groups from lysine residues. Plays a role in oxidative stress resistance. Might promote neuronal cell death under ischemic conditions and cell death in touch neurons induced by mec-4 channel hyperactivation, possibly downstream of the insulin-like receptor daf-2. Might attenuate the reactive oxygen species (ROS) scavenging system, that eliminates ROS in ischemic conditions, under dietary deprivation and when glycolysis is blocked. This Caenorhabditis elegans protein is NAD-dependent protein deacylase sir-2.3 (sir-2.3).